The sequence spans 593 residues: Myc box-dependent-interacting protein 1 (593 aa).

Ala2 carries the N-acetylalanine modification. The interaction with BIN2 stretch occupies residues 2–122 (AEMGSKGVTA…DYHQKLVDQA (121 aa)). Coiled-coil stretches lie at residues 15 to 42 (ASNV…TKDE) and 193 to 267 (HLVA…NDVL). The region spanning 29-276 (VLQKLGKADE…LVGLEKQHGS (248 aa)) is the BAR domain. Disordered stretches follow at residues 280-354 (TVKA…KEVK) and 400-488 (PVTS…AASS). Residues Ser296, Ser298, and Ser303 each carry the phosphoserine modification. Thr307 and Thr323 each carry phosphothreonine. At Ser331 the chain carries Phosphoserine. Residues 378-421 (FEAPGPFSEQASLLDLDFDPLPPVTSPVKAPTPSGQSIPWDLWE) form a clathrin-binding region. In terms of domain architecture, SH3 spans 520 to 593 (GFMFKVQAQH…FPENFTERVP (74 aa)).

Heterodimer with AMPH. Binds SH3GLB1. Interacts (via SH3 domain) with DNM1. Interacts with SYNJ1. Interacts (via SH3 domain) with DNM2. Isoform IIA interacts with CLTC. Isoform IIB does not interact with CLTC. Isoform IIC1 does not interact with CLTC. Isoform IIC2 does not interact with CLTC. Interacts with AP2A2. Interacts with AP2B1. Interacts with MYC (via N-terminal transactivation domain); the interaction requires the integrity of the conserved MYC box regions 1 and 2. Interacts with BIN2. Interacts with SNX4. Interacts (via BAR domain) with BACE1. Binds (via BAR domain) F-actin. In terms of assembly, (Microbial infection) Interacts (SH3 domain) with HCV NS5A. Post-translationally, phosphorylated by protein kinase C. Ubiquitous. Highest expression in the brain and muscle. Expressed in oligodendrocytes. Isoform IIA is expressed only in the brain, where it is detected in the gray matter, but not in the white matter. Isoform BIN1 is widely expressed with highest expression in skeletal muscle.

It is found in the nucleus. It localises to the cytoplasm. Its subcellular location is the endosome. The protein localises to the cell membrane. The protein resides in the sarcolemma. It is found in the T-tubule. Is a key player in the control of plasma membrane curvature, membrane shaping and membrane remodeling. Required in muscle cells for the formation of T-tubules, tubular invaginations of the plasma membrane that function in depolarization-contraction coupling. Is a negative regulator of endocytosis. Is also involved in the regulation of intracellular vesicles sorting, modulation of BACE1 trafficking and the control of amyloid-beta production. In neuronal circuits, endocytosis regulation may influence the internalization of PHF-tau aggregates. May be involved in the regulation of MYC activity and the control cell proliferation. Has actin bundling activity and stabilizes actin filaments against depolymerization in vitro. The protein is Myc box-dependent-interacting protein 1 (BIN1) of Homo sapiens (Human).